Reading from the N-terminus, the 521-residue chain is Aldehyde dehydrogenase, mitochondrial (521 aa).

A mitochondrion-targeting transit peptide spans 1 to 21; the sequence is MLRPAALAAARLVLRQGRRLL. Residues 13–28 carry the SIFI-degron motif; that stretch reads VLRQGRRLLSAAPTQA. An N6-acetyllysine mark is found at lysine 56, lysine 77, and lysine 163. 266–271 serves as a coordination point for NAD(+); that stretch reads GSTEVG. Glutamate 289 (proton acceptor) is an active-site residue. Cysteine 323 (nucleophile) is an active-site residue. Lysine 372, lysine 379, lysine 387, lysine 430, lysine 432, lysine 445, and lysine 455 each carry N6-acetyllysine.

Belongs to the aldehyde dehydrogenase family. Homotetramer. Post-translationally, in response to mitochondrial stress, the precursor protein is ubiquitinated by the SIFI complex in the cytoplasm before mitochondrial import, leading to its degradation. Within the SIFI complex, UBR4 initiates ubiquitin chain that are further elongated or branched by KCMF1.

The protein resides in the mitochondrion matrix. The enzyme catalyses an aldehyde + NAD(+) + H2O = a carboxylate + NADH + 2 H(+). The protein operates within alcohol metabolism; ethanol degradation; acetate from ethanol: step 2/2. Its function is as follows. Required for clearance of cellular formaldehyde, a cytotoxic and carcinogenic metabolite that induces DNA damage. This chain is Aldehyde dehydrogenase, mitochondrial (ALDH2), found in Sus scrofa (Pig).